Reading from the N-terminus, the 874-residue chain is MTISHIDPEYQANTIEPSVQQDWENRKVFKVADTVEGKHRYILSMFPYPSGKLHMGHVRNYTIGDVISRFYRLKGEAVLQPMGWDAFGLPAENAAIAHKVAPAKWTFENIAYMRDQLKKLGLSVDWDREFATCTPEYYHWEQWLFVQLYKKGLIYRKLSTVNWDPVDQTVLANEQVENGRGWRSGALVEKRDIPMYYFRITDYAQELLDDLDTLQDGWPQQVLTMQRNWIGRSTGMEITFPSANTEIYADGLTVYTTRADTLMGVTYVAVAAEHPLALKAAENNPELAAFIEECRMGSVAEADLATAEKKGMATGLFVKHPVTGEELPVWIANYVLMSYGSGAVMAVPAHDERDFEFANKFNLPIKQVIDAKGADDADYSATEWQEWYGSKEGKLVNSGEFDGLEFQAAFDAFLAKLEPQGLANSKVQFRLRDWGVSRQRYWGCPIPMINCDTCGQVTVPEDQLPVVLPTDVVPDGSGNPLNKMPEFYETKCPCCGGDARRETDTLDTFVESSWYYARYASPDFTGGMVKPEAAKNWLPVNQYIGGVEHAILHLLYARFFHKLMRDEGVVQGNEPFTNLLTQGMVLADTFYREAENGKKTWFNPADIELERDEKGRIISAKYSGDGQEVIIGGQEKMSKSKNNGIDPQAIIDQYGADTARVFMMFAAPPDQSLEWSDAGVEGANRFLKRVWRLVASFLEKGNSATAIDKANLSKDAQDLRRKTHETIQKVSDDIERRHAFNTAIAALMELLNASNKFEAKDDNDVAVEREAITTLLTLLAPFAPHLSQTLLAQFGTDLTEATFPEVDASALTRNTQTIVVQVNGKLRGKLEVSVDISKDELLAQAKALPEVQQFLTGPTKKEIVVPNKLVNLVV.

The 'HIGH' region signature appears at 47-57 (PYPSGKLHMGH). The 'KMSKS' region signature appears at 636–640 (KMSKS). Position 639 (lysine 639) interacts with ATP.

The protein belongs to the class-I aminoacyl-tRNA synthetase family.

It localises to the cytoplasm. The catalysed reaction is tRNA(Leu) + L-leucine + ATP = L-leucyl-tRNA(Leu) + AMP + diphosphate. The polypeptide is Leucine--tRNA ligase (Acinetobacter baumannii (strain AB307-0294)).